Here is a 508-residue protein sequence, read N- to C-terminus: Replication factor C large subunit (508 aa).

Position 43-50 (Gly-43–Thr-50) interacts with ATP. The segment at Ala-425–Met-508 is disordered. Composition is skewed to acidic residues over residues Gly-443–Gly-461 and Thr-483–Gln-500.

It belongs to the activator 1 small subunits family. RfcL subfamily. Heteromultimer composed of small subunits (RfcS) and large subunits (RfcL).

Its function is as follows. Part of the RFC clamp loader complex which loads the PCNA sliding clamp onto DNA. This is Replication factor C large subunit from Haloarcula marismortui (strain ATCC 43049 / DSM 3752 / JCM 8966 / VKM B-1809) (Halobacterium marismortui).